A 529-amino-acid chain; its full sequence is Nucleolar protein 58 (529 aa).

T34 is modified (phosphothreonine). S109 is subject to Phosphoserine. Residues 155-400 form a sufficient for interaction with NOPCHAP1 region; that stretch reads ADKVDTMIVQ…LEARLRTLED (246 aa). Residue K157 forms a Glycyl lysine isopeptide (Lys-Gly) (interchain with G-Cter in SUMO2) linkage. The 119-residue stretch at 282 to 400 folds into the Nop domain; it reads IAPNVTVMVG…LEARLRTLED (119 aa). 2 positions are modified to phosphoserine: S304 and S351. Residues K353, K411, K415, K422, K426, K441, K444, and K465 each participate in a glycyl lysine isopeptide (Lys-Gly) (interchain with G-Cter in SUMO2) cross-link. Positions 409–529 are disordered; that stretch reads TGKALAKTEK…KKKKKRENED (121 aa). The span at 414-427 shows a compositional bias: basic and acidic residues; that stretch reads AKTEKYEHKSEVKT. Residue K467 forms a Glycyl lysine isopeptide (Lys-Gly) (interchain with G-Cter in SUMO); alternate linkage. K467 participates in a covalent cross-link: Glycyl lysine isopeptide (Lys-Gly) (interchain with G-Cter in SUMO1); alternate. A Glycyl lysine isopeptide (Lys-Gly) (interchain with G-Cter in SUMO2); alternate cross-link involves residue K467. Over residues 469-481 the composition is skewed to acidic residues; the sequence is EEEEEEKVAEEEE. S483 is modified (phosphoserine). A Glycyl lysine isopeptide (Lys-Gly) (interchain with G-Cter in SUMO2) cross-link involves residue K485. The span at 485–495 shows a compositional bias: basic residues; it reads KKKKKRGKKKH. K497 participates in a covalent cross-link: Glycyl lysine isopeptide (Lys-Gly) (interchain with G-Cter in SUMO); alternate. K497 participates in a covalent cross-link: Glycyl lysine isopeptide (Lys-Gly) (interchain with G-Cter in SUMO2); alternate. Phosphoserine is present on residues S502 and S514. Over residues 517–529 the composition is skewed to basic residues; the sequence is KKKKKKKKRENED.

The protein belongs to the NOP5/NOP56 family. In terms of assembly, core component of box C/D small nucleolar ribonucleoprotein (snoRNP) particles; the core proteins SNU13, NOP56, NOP58 and FBL or FBLL1 assemble stepwise onto the snoRNA. Interacts with NOLC1/Nopp140. Interacts with NOPCHAP1, NUFIP1, RUVBL1 and RUVBL2; NOPCHAP1 bridges the association of NOP58 with RUVBL1:RUVBL2 and NUFIP1. Interacts with PIH1D1. Part of the small subunit (SSU) processome, composed of more than 70 proteins and the RNA chaperone small nucleolar RNA (snoRNA) U3. Sumoylation is essential for high-affinity binding to snoRNAs. As to expression, ubiquitous.

The protein localises to the nucleus. It localises to the nucleolus. The protein resides in the nucleoplasm. Its function is as follows. Required for the biogenesis of box C/D snoRNAs such as U3, U8 and U14 snoRNAs. Part of the small subunit (SSU) processome, first precursor of the small eukaryotic ribosomal subunit. During the assembly of the SSU processome in the nucleolus, many ribosome biogenesis factors, an RNA chaperone and ribosomal proteins associate with the nascent pre-rRNA and work in concert to generate RNA folding, modifications, rearrangements and cleavage as well as targeted degradation of pre-ribosomal RNA by the RNA exosome. Core component of box C/D small nucleolar ribonucleoprotein (snoRNP) complexes that function in methylation of multiple sites on ribosomal RNAs (rRNAs) and messenger RNAs (mRNAs). In Homo sapiens (Human), this protein is Nucleolar protein 58.